Consider the following 441-residue polypeptide: Protein disulfide isomerase-like 2-3 (441 aa).

A signal peptide spans 1 to 18 (MRPAVAAALLLVAAAVAA). Thioredoxin domains lie at 19–139 (SPVS…ALLR) and 159–276 (SEKT…ANAA). Catalysis depends on nucleophile residues Cys-59 and Cys-62. An intrachain disulfide couples Cys-59 to Cys-62. The segment at 143–166 (NGKTSAGSGGKKSGGSSEKTEPSA) is disordered. Catalysis depends on nucleophile residues Cys-195 and Cys-198. Cys-195 and Cys-198 are joined by a disulfide.

It belongs to the protein disulfide isomerase family.

Its subcellular location is the endoplasmic reticulum lumen. It catalyses the reaction Catalyzes the rearrangement of -S-S- bonds in proteins.. Functionally, acts as a protein-folding catalyst that interacts with nascent polypeptides to catalyze the formation, isomerization, and reduction or oxidation of disulfide bonds. May play a role in storage protein biogenesis. This is Protein disulfide isomerase-like 2-3 (PDIL2-3) from Oryza sativa subsp. japonica (Rice).